A 572-amino-acid chain; its full sequence is Methionine--tRNA ligase (572 aa).

Residues 11-21 (PYINGIKHLGN) carry the 'HIGH' region motif. 4 residues coordinate Zn(2+): Cys143, Cys146, Cys156, and Cys159. The short motif at 346-350 (QFSTS) is the 'KMSKS' region element. Thr349 provides a ligand contact to ATP.

This sequence belongs to the class-I aminoacyl-tRNA synthetase family. MetG type 1 subfamily. In terms of assembly, monomer. Zn(2+) serves as cofactor.

The protein localises to the cytoplasm. It carries out the reaction tRNA(Met) + L-methionine + ATP = L-methionyl-tRNA(Met) + AMP + diphosphate. Functionally, is required not only for elongation of protein synthesis but also for the initiation of all mRNA translation through initiator tRNA(fMet) aminoacylation. The protein is Methionine--tRNA ligase of Cereibacter sphaeroides (strain ATCC 17025 / ATH 2.4.3) (Rhodobacter sphaeroides).